The following is a 258-amino-acid chain: Tetraspanin-15 (258 aa).

Residues 1–20 (MGALGDSAYGARGRLIKFSY) are Cytoplasmic-facing. The helical transmembrane segment at 21–41 (IVTALISILFSISCICYGIWL) threads the bilayer. The Extracellular portion of the chain corresponds to 42 to 62 (LARRSQYAELVSPSLYVDVGR). The chain crosses the membrane as a helical span at residues 63-83 (ILVIISILSILNYLICFYAIF). Topologically, residues 84–93 (KEMRCFVTSC) are cytoplasmic. A helical transmembrane segment spans residues 94–114 (AVASIVIAVMLIIGGCIGLNF). Residues 115 to 223 (RDQLTHYTPL…STCYEPLQND (109 aa)) are Extracellular-facing. The chain crosses the membrane as a helical span at residues 224–244 (LLHVMNVASWLCITNAIVQII). The Cytoplasmic portion of the chain corresponds to 245-258 (PSVAGCWYSKLIRK).

It belongs to the tetraspanin (TM4SF) family. Interacts with doxa-1 and bli-3. Expressed in the body wall (hyp7 hypodermal syncitium), pharynx and vulva. Expressed in a punctate pattern along the thick region of the hypodermis.

It localises to the membrane. Functionally, plays a role in cuticle biogenesis. In complex with doxa-1 and the dual oxidase bli-3, promotes the generation of reactive oxygen species (ROS) and tyrosine cross-linking of collagen, thus stabilizing cuticular extracellular matrix. The polypeptide is Tetraspanin-15 (Caenorhabditis elegans).